The sequence spans 83 residues: MSDNTVLAPPTSNQGPTTPRKGPPKFKQRQTRQFKSKPPKKGVKGFGDDIPGMEGLGTDITVICPWEAFSHLELHELAQFGII.

Positions 1–17 (MSDNTVLAPPTSNQGPT) are enriched in polar residues. Residues 1–51 (MSDNTVLAPPTSNQGPTTPRKGPPKFKQRQTRQFKSKPPKKGVKGFGDDIP) form a disordered region. Residues 22–43 (GPPKFKQRQTRQFKSKPPKKGV) are compositionally biased toward basic residues.

It belongs to the rod/cone cGMP-PDE gamma subunit family. As to quaternary structure, tetramer composed of two catalytic chains (alpha and beta), and two inhibitory chains (gamma).

The enzyme catalyses 3',5'-cyclic GMP + H2O = GMP + H(+). Functionally, participates in processes of transmission and amplification of the visual signal. cGMP-PDEs are the effector molecules in G-protein-mediated phototransduction in vertebrate rods and cones. The protein is Retinal cone rhodopsin-sensitive cGMP 3',5'-cyclic phosphodiesterase subunit gamma (PDE6H) of Bos taurus (Bovine).